Reading from the N-terminus, the 4306-residue chain is Cytoplasmic dynein 2 heavy chain 1 (4306 aa).

Residues 1 to 1650 (MAGSLSDVRK…YVQMVDSELQ (1650 aa)) form a stem region. 145–152 (LGVVLRKS) serves as a coordination point for ATP. Positions 669 to 696 (KELEGYIQKLQNAAERLATENRRLRKWH) form a coiled coil. AAA regions lie at residues 1651–1875 (YTYE…VLRG), 1941–2161 (SALK…KQND), 2249–2505 (LTAD…WVLG), and 2617–2862 (HYGR…ESCK). ATP contacts are provided by residues 1689–1696 (GPAGTGKT), 1979–1986 (GPSGAGKS), 2291–2298 (GPEGCGKG), and 2655–2662 (GRSGVGRR). The tract at residues 2880 to 3168 (AISSSKRKEL…AEVSKAQETI (289 aa)) is stalk. Coiled-coil stretches lie at residues 2896–2981 (LQAG…KEVQ), 3108–3199 (LETE…LATL), and 3407–3441 (IQHE…SLLE). 2 AAA regions span residues 3243–3472 (LCTE…LIQD) and 3689–3904 (MALF…VIDR).

The protein belongs to the dynein heavy chain family. In terms of assembly, the cytoplasmic dynein complex 2 is probably composed by a heavy chain DYNC2H1 homodimer and a number of DYNC2LI1 light intermediate chains. In terms of tissue distribution, widely expressed both in ciliated and unciliated tissues. Detected in brain and testis (at protein level).

It is found in the cytoplasm. The protein resides in the cytoskeleton. The protein localises to the cilium axoneme. Its subcellular location is the cell membrane. Its function is as follows. May function as a motor for intraflagellar retrograde transport. Functions in cilia biogenesis. May play a role in transport between endoplasmic reticulum and Golgi or organization of the Golgi in cells. The protein is Cytoplasmic dynein 2 heavy chain 1 (Dync2h1) of Rattus norvegicus (Rat).